The following is a 72-amino-acid chain: MSVKKKLLAELRQKSLVELDAFIHENKKALFSLRAEAALQNKAVKTHLFSMYKKTIARSMTVKQEKEGKVDG.

It belongs to the universal ribosomal protein uL29 family.

This is Large ribosomal subunit protein uL29 from Chlamydia abortus (strain DSM 27085 / S26/3) (Chlamydophila abortus).